The sequence spans 100 residues: NADH-quinone oxidoreductase subunit K (100 aa).

The next 3 membrane-spanning stretches (helical) occupy residues 4-24 (LSNY…GVLT), 29-49 (IVVF…FVAF), and 60-80 (IFVF…LALF).

The protein belongs to the complex I subunit 4L family. NDH-1 is composed of 14 different subunits. Subunits NuoA, H, J, K, L, M, N constitute the membrane sector of the complex.

It localises to the cell inner membrane. The enzyme catalyses a quinone + NADH + 5 H(+)(in) = a quinol + NAD(+) + 4 H(+)(out). In terms of biological role, NDH-1 shuttles electrons from NADH, via FMN and iron-sulfur (Fe-S) centers, to quinones in the respiratory chain. The immediate electron acceptor for the enzyme in this species is believed to be ubiquinone. Couples the redox reaction to proton translocation (for every two electrons transferred, four hydrogen ions are translocated across the cytoplasmic membrane), and thus conserves the redox energy in a proton gradient. The polypeptide is NADH-quinone oxidoreductase subunit K (Trichlorobacter lovleyi (strain ATCC BAA-1151 / DSM 17278 / SZ) (Geobacter lovleyi)).